Here is a 65-residue protein sequence, read N- to C-terminus: Trypsin inhibitor 1 (65 aa).

3 cysteine pairs are disulfide-bonded: C39–C56, C46–C58, and C52–C64.

Belongs to the protease inhibitor I7 (squash-type serine protease inhibitor) family.

It is found in the secreted. In terms of biological role, inhibits trypsin. In Trichosanthes kirilowii (Chinese snake gourd), this protein is Trypsin inhibitor 1.